The chain runs to 347 residues: MSDRLTLLRPDDWHIHLRDGAVLPHTVADVARTFGRAIIMPNLVPPVRNAQQADAYRQRILAARPAGSRFEPLMVLYLTDQTTPEDIRTAKASGFVHAAKLYPAGATTNSDSGVTSIDKIFPALEAMAEVGMLLLVHGEVTRGEIDVFDREKVFIDEHLRRVVERFPTLKVVFEHITTGEAVQFVNEASANVAATITAHHLLYNRNHMLVGGIRPHFYCLPILKRNTHQASLLDAATSGSGKFFLGTDSAPHAQHAKENACGCAGCYTAYAAIELYAEAFEQRNALDKLEGFASLHGPAFYGLPANQDTITLVRDEWTAPASLPFGELTVIPLRAGEKLRWRLEEHA.

Residues His-14 and His-16 each coordinate Zn(2+). Residues 16-18 and Asn-42 each bind substrate; that span reads HLR. Residues Lys-100, His-137, and His-175 each coordinate Zn(2+). Lys-100 carries the post-translational modification N6-carboxylysine. Substrate is bound at residue His-137. Leu-220 contacts substrate. Position 248 (Asp-248) interacts with Zn(2+). The active site involves Asp-248. The substrate site is built by His-252 and Ala-264.

Belongs to the metallo-dependent hydrolases superfamily. DHOase family. Class II DHOase subfamily. Homodimer. Zn(2+) is required as a cofactor.

The enzyme catalyses (S)-dihydroorotate + H2O = N-carbamoyl-L-aspartate + H(+). The protein operates within pyrimidine metabolism; UMP biosynthesis via de novo pathway; (S)-dihydroorotate from bicarbonate: step 3/3. Its function is as follows. Catalyzes the reversible cyclization of carbamoyl aspartate to dihydroorotate. This chain is Dihydroorotase, found in Pseudomonas savastanoi pv. phaseolicola (strain 1448A / Race 6) (Pseudomonas syringae pv. phaseolicola (strain 1448A / Race 6)).